The sequence spans 574 residues: Septation ring formation regulator EzrA (574 aa).

Residues 1-7 are Extracellular-facing; the sequence is MSSGIIL. A helical transmembrane segment spans residues 8–26; the sequence is LIVAIVLLVIIAYLVGVII. Topologically, residues 27 to 574 are cytoplasmic; that stretch reads RKRNDTLITS…YEKTRERIRF (548 aa). Coiled coils occupy residues 102-131, 161-190, 276-379, and 459-493; these read NFIR…REAL, ENED…FVAL, VTLD…QQEK, and QLEA…NLEE.

The protein belongs to the EzrA family.

The protein resides in the cell membrane. In terms of biological role, negative regulator of FtsZ ring formation; modulates the frequency and position of FtsZ ring formation. Inhibits FtsZ ring formation at polar sites. Interacts either with FtsZ or with one of its binding partners to promote depolymerization. The polypeptide is Septation ring formation regulator EzrA (Streptococcus equi subsp. zooepidemicus (strain H70)).